The chain runs to 469 residues: Interstitial collagenase (469 aa).

Residues M1–S19 form the signal peptide. The propeptide at F20 to Q99 is activation peptide. Phosphoserine is present on S57. Positions P90–V97 match the Cysteine switch motif. C92 is a Zn(2+) binding site. A metalloprotease region spans residues A98–K276. A glycan (N-linked (GlcNAc...) asparagine) is linked at N120. The Ca(2+) site is built by D124 and D158. Zn(2+)-binding residues include H168 and D170. Ca(2+) is bound by residues D175, G176, G178, and N180. A Zn(2+)-binding site is contributed by H183. Residues G190, G192, and D194 each coordinate Ca(2+). Residue H196 coordinates Zn(2+). Ca(2+)-binding residues include D198, E199, and E201. Position 218 (H218) interacts with Zn(2+). E219 is an active-site residue. H222 and H228 together coordinate Zn(2+). The residue at position 274 (T274) is a Phosphothreonine. Hemopexin repeat units lie at residues P275–L324, P325–P371, V374–I422, and G423–C466. Cysteines 278 and 466 form a disulfide. Ca(2+) contacts are provided by D285 and E329. A Phosphotyrosine; by PKDCC modification is found at Y360. The Ca(2+) site is built by D378 and D427.

This sequence belongs to the peptidase M10A family. As to quaternary structure, (Microbial infection) Interacts with HIV-1 Tat. Requires Ca(2+) as cofactor. The cofactor is Zn(2+). In terms of processing, undergoes autolytic cleavage to two major forms (22 kDa and 27 kDa). A minor form (25 kDa) is the glycosylated form of the 22 kDa form. The 27 kDa form has no activity while the 22/25 kDa form can act as activator for collagenase. Tyrosine phosphorylated in platelets by PKDCC/VLK.

The protein resides in the secreted. It localises to the extracellular space. Its subcellular location is the extracellular matrix. The catalysed reaction is Cleavage of the triple helix of collagen at about three-quarters of the length of the molecule from the N-terminus, at 775-Gly-|-Ile-776 in the alpha1(I) chain. Cleaves synthetic substrates and alpha-macroglobulins at bonds where P1' is a hydrophobic residue.. Its activity is regulated as follows. Can be activated without removal of the activation peptide. Cleaves collagens of types I, II, and III at one site in the helical domain. Also cleaves collagens of types VII and X. In case of HIV infection, interacts and cleaves the secreted viral Tat protein, leading to a decrease in neuronal Tat's mediated neurotoxicity. This Homo sapiens (Human) protein is Interstitial collagenase (MMP1).